The primary structure comprises 100 residues: NADH-quinone oxidoreductase subunit K (100 aa).

The next 3 helical transmembrane spans lie at 4-24 (TSYY…GVLL), 29-49 (IVIF…LVAF), and 61-81 (IVFF…ALLV).

It belongs to the complex I subunit 4L family. As to quaternary structure, NDH-1 is composed of 14 different subunits. Subunits NuoA, H, J, K, L, M, N constitute the membrane sector of the complex.

The protein localises to the cell membrane. It catalyses the reaction a quinone + NADH + 5 H(+)(in) = a quinol + NAD(+) + 4 H(+)(out). In terms of biological role, NDH-1 shuttles electrons from NADH, via FMN and iron-sulfur (Fe-S) centers, to quinones in the respiratory chain. The immediate electron acceptor for the enzyme in this species is believed to be ubiquinone. Couples the redox reaction to proton translocation (for every two electrons transferred, four hydrogen ions are translocated across the cytoplasmic membrane), and thus conserves the redox energy in a proton gradient. This chain is NADH-quinone oxidoreductase subunit K, found in Chloroflexus aggregans (strain MD-66 / DSM 9485).